The sequence spans 1307 residues: Rab3 GTPase-activating protein regulatory subunit (1307 aa).

The protein belongs to the Rab3-GAP regulatory subunit family. The Rab3 GTPase-activating complex is a heterodimer composed of rbg-1 and rbg-2.

It localises to the cytoplasm. Probable regulatory subunit of a GTPase activating protein that has specificity for Rab3 subfamily. Rab3 proteins are involved in regulated exocytosis of neurotransmitters and hormones. Rab3 GTPase-activating complex specifically converts active Rab3-GTP to the inactive form Rab3-GDP. The sequence is that of Rab3 GTPase-activating protein regulatory subunit (rbg-2) from Caenorhabditis elegans.